The following is a 2166-amino-acid chain: Protein TIC236, chloroplastic (2166 aa).

A chloroplast-targeting transit peptide spans methionine 1–arginine 37. Residues isoleucine 38–glycine 101 are Stromal-facing. A helical membrane pass occupies residues leucine 102–tryptophan 122. Residues tyrosine 123–aspartate 2166 are Chloroplast intermembrane-facing. Positions methionine 1611–arginine 1649 are disordered. Residues alanine 1631–arginine 1649 are compositionally biased toward basic and acidic residues.

This sequence belongs to the TamB family. Part of the TIC complex, which can interact with components of the TOC complex to form a larger import complex. Interacts with the TOC complex component TOC75-3.

The protein localises to the plastid. It is found in the chloroplast inner membrane. It localises to the chloroplast intermembrane space. Part of the inner chloroplast membrane translocon complex (TIC) which associates with the outer chloroplast membrane translocon complex (TOC) and forms a supercomplex involved in protein precursor import into the chloroplast stroma. Required for the import of HSP93, TIC40 and RBCS protein precursors in the chloroplast stroma. Links the outer and inner membrane translocons of the chloroplast envelope. This is Protein TIC236, chloroplastic from Arabidopsis thaliana (Mouse-ear cress).